We begin with the raw amino-acid sequence, 125 residues long: Inner membrane protein YbaN (125 aa).

Topologically, residues 1-6 are cytoplasmic; sequence MQRIIL. Residues 7–26 form a helical membrane-spanning segment; that stretch reads IIIGWLAVVLGTLGVVLPVL. At 27–45 the chain is on the periplasmic side; it reads PTTPFILLAAWCFARSSPR. A helical transmembrane segment spans residues 46–63; sequence FHAWLLYRSWFGSYLRFW. The Cytoplasmic portion of the chain corresponds to 64–74; it reads QKHHAMPRGVK. The chain crosses the membrane as a helical span at residues 75-92; that stretch reads PRAILLILLTFAISLWFV. The Periplasmic segment spans residues 93-95; it reads QMP. Residues 96-118 form a helical membrane-spanning segment; it reads WVRIMLLVILACLLFYMWRIPVI. At 119–125 the chain is on the cytoplasmic side; that stretch reads DEKQEKH.

The protein localises to the cell inner membrane. In Escherichia coli O157:H7, this protein is Inner membrane protein YbaN (ybaN).